The primary structure comprises 271 residues: MTESYALFVAFVLGIVEGLTEFLPVSSTGHMIIVGHLLGFEGPKAATFEVVIQMGSILAVVAVFWRRLFGLIGIHFGQKPPQDHATLSLVHIILGMLPAVIIGLGIHSWIKANLFGPETVMYALVAGGILLIIAEKFRPTVRSETLDDISYKQAFGIGLFQCLALWPGFSRSGATISGGMLMGISRQAAAEFSFILAVPMMVAASGLDLYKSRDLLSMADFPMFAVGFITAFVVAMIAIKTFLALIRRLDFIPFAIYRFIVAFAVYLVFVA.

The next 8 helical transmembrane spans lie at Tyr-5–Val-25, Ala-45–Trp-65, Thr-86–Ile-106, Leu-114–Ala-134, Ile-149–Phe-169, Ala-189–Leu-209, Val-226–Ile-246, and Phe-251–Ala-271.

It belongs to the UppP family.

The protein resides in the cell inner membrane. The enzyme catalyses di-trans,octa-cis-undecaprenyl diphosphate + H2O = di-trans,octa-cis-undecaprenyl phosphate + phosphate + H(+). Functionally, catalyzes the dephosphorylation of undecaprenyl diphosphate (UPP). Confers resistance to bacitracin. This is Undecaprenyl-diphosphatase from Aeromonas salmonicida (strain A449).